The sequence spans 206 residues: Translation initiation factor IF-3 (206 aa).

Belongs to the IF-3 family. Monomer.

Its subcellular location is the cytoplasm. In terms of biological role, IF-3 binds to the 30S ribosomal subunit and shifts the equilibrium between 70S ribosomes and their 50S and 30S subunits in favor of the free subunits, thus enhancing the availability of 30S subunits on which protein synthesis initiation begins. In Chlorobium luteolum (strain DSM 273 / BCRC 81028 / 2530) (Pelodictyon luteolum), this protein is Translation initiation factor IF-3.